The following is a 509-amino-acid chain: Aspartyl/glutamyl-tRNA(Asn/Gln) amidotransferase subunit B (509 aa).

This sequence belongs to the GatB/GatE family. GatB subfamily. Heterotrimer of A, B and C subunits.

The enzyme catalyses L-glutamyl-tRNA(Gln) + L-glutamine + ATP + H2O = L-glutaminyl-tRNA(Gln) + L-glutamate + ADP + phosphate + H(+). The catalysed reaction is L-aspartyl-tRNA(Asn) + L-glutamine + ATP + H2O = L-asparaginyl-tRNA(Asn) + L-glutamate + ADP + phosphate + 2 H(+). Functionally, allows the formation of correctly charged Asn-tRNA(Asn) or Gln-tRNA(Gln) through the transamidation of misacylated Asp-tRNA(Asn) or Glu-tRNA(Gln) in organisms which lack either or both of asparaginyl-tRNA or glutaminyl-tRNA synthetases. The reaction takes place in the presence of glutamine and ATP through an activated phospho-Asp-tRNA(Asn) or phospho-Glu-tRNA(Gln). This chain is Aspartyl/glutamyl-tRNA(Asn/Gln) amidotransferase subunit B, found in Psychrobacter arcticus (strain DSM 17307 / VKM B-2377 / 273-4).